A 239-amino-acid polypeptide reads, in one-letter code: THAP domain-containing protein 3 (239 aa).

The THAP-type zinc-finger motif lies at 1–82 (MPKSCAARQC…LKHNAVPTVF (82 aa)). Disordered regions lie at residues 88-125 (PQLV…LGRK) and 139-174 (VGGL…PTQP). The HCFC1-binding motif (HBM) motif lies at 176–179 (DHSY).

Component of a THAP1/THAP3-HCFC1-OGT complex that contains at least, either THAP1 or THAP3, HCFC1 and OGT. Interacts directly with OGT and HCFC1 (via its HBM).

Component of a THAP1/THAP3-HCFC1-OGT complex that is required for the regulation of the transcriptional activity of RRM1. In Bos taurus (Bovine), this protein is THAP domain-containing protein 3 (THAP3).